A 990-amino-acid chain; its full sequence is Membrane alanyl aminopeptidase (990 aa).

The signal sequence occupies residues 1–15; sequence FTIFLGVALLQGVLT. The propeptide at 16-35 is activation peptide; sequence LSPIPVPEEEWAEFSRMLRD. N-linked (GlcNAc...) asparagine glycosylation is present at asparagine 295. A substrate-binding site is contributed by 321–325; sequence GAMEN. Residue histidine 357 participates in Zn(2+) binding. Glutamate 358 functions as the Proton acceptor in the catalytic mechanism. Histidine 361 and glutamate 380 together coordinate Zn(2+). Residues asparagine 609, asparagine 623, and asparagine 752 are each glycosylated (N-linked (GlcNAc...) asparagine). The GPI-anchor amidated glycine moiety is linked to residue glycine 968. A propeptide spans 969-990 (removed in mature form); that stretch reads SGNIAALSVVSLLVTLAINMVA.

It belongs to the peptidase M1 family. Zn(2+) is required as a cofactor. In terms of tissue distribution, midgut brush-border membrane.

The protein resides in the cell membrane. Binds to the B.thuringiensis toxin, CryIA(C). The sequence is that of Membrane alanyl aminopeptidase from Manduca sexta (Tobacco hawkmoth).